Consider the following 407-residue polypeptide: Lysosomal phospholipase A and acyltransferase (407 aa).

An N-terminal signal peptide occupies residues 1 to 29 (MGCLCLYRSTLLTGGLLFLLMLADPAFPA). Asp-41 contacts substrate. A disulfide bridge connects residues Cys-60 and Cys-84. An N-linked (GlcNAc...) asparagine glycan is attached at Asn-94. The active-site Acyl-ester intermediate is the Ser-193. Ser-193 is a Zn(2+) binding site. Met-194 provides a ligand contact to substrate. N-linked (GlcNAc...) asparagine glycosylation is present at Asn-284. Residues Asp-355 and His-387 each act as charge relay system in the active site. His-387 provides a ligand contact to Zn(2+). A glycan (N-linked (GlcNAc...) asparagine) is linked at Asn-393.

Belongs to the AB hydrolase superfamily. Lipase family. Post-translationally, N-glycosylated. In terms of processing, N-glycosylated. N-glycosylation is important for maturation of the enzyme and normal subcellular location. In terms of tissue distribution, detected in brain (at protein level).

It localises to the lysosome. The protein localises to the secreted. The protein resides in the membrane. It carries out the reaction a 1,2-diacyl-sn-glycero-3-phosphocholine + H2O = a 2-acyl-sn-glycero-3-phosphocholine + a fatty acid + H(+). It catalyses the reaction 1-hexadecanoyl-2-(9Z-octadecenoyl)-sn-glycero-3-phosphocholine + H2O = 2-(9Z-octadecenoyl)-sn-glycero-3-phosphocholine + hexadecanoate + H(+). The catalysed reaction is 1,2-di-(9Z-octadecenoyl)-sn-glycero-3-phosphocholine + H2O = 2-(9Z-octadecenoyl)-sn-glycero-3-phosphocholine + (9Z)-octadecenoate + H(+). The enzyme catalyses 1-hexadecanoyl-2-glutaroyl-sn-glycero-3-phosphocholine + H2O = 2-glutaroyl-sn-glycero-3-phosphocholine + hexadecanoate + H(+). It carries out the reaction 1-hexadecanoyl-2-nonadioyl-sn-glycero-3-phosphocholine + H2O = 2-nonadioyl-sn-glycero-3-phosphocholine + hexadecanoate + H(+). It catalyses the reaction 1-hexadecanoyl-2-(5-oxopentanoyl)-sn-glycero-3-phosphocholine + H2O = 2-(5-oxopentanoyl)-sn-glycero-3-phosphocholine + hexadecanoate + H(+). The catalysed reaction is 1-hexadecanoyl-2-(9-oxononanoyl)-sn-glycero-3-phosphocholine + H2O = 2-(9-oxononanoyl)-sn-glycero-3-phosphocholine + hexadecanoate + H(+). The enzyme catalyses 1,2-dihexadecanoyl-sn-glycero-3-phosphocholine + H2O = 2-hexadecanoyl-sn-glycero-3-phosphocholine + hexadecanoate + H(+). It carries out the reaction a 1,2-diacyl-sn-glycero-3-phosphocholine + H2O = a 1-acyl-sn-glycero-3-phosphocholine + a fatty acid + H(+). It catalyses the reaction 1-hexadecanoyl-2-(9Z-octadecenoyl)-sn-glycero-3-phosphocholine + H2O = 1-hexadecanoyl-sn-glycero-3-phosphocholine + (9Z)-octadecenoate + H(+). The catalysed reaction is 1,2-di-(9Z-octadecenoyl)-sn-glycero-3-phosphocholine + H2O = 1-(9Z-octadecenoyl)-sn-glycero-3-phosphocholine + (9Z)-octadecenoate + H(+). The enzyme catalyses 1,2-dihexadecanoyl-sn-glycero-3-phosphocholine + H2O = 1-hexadecanoyl-sn-glycero-3-phosphocholine + hexadecanoate + H(+). It carries out the reaction a 1-acyl-sn-glycero-3-phosphocholine + H2O = sn-glycerol 3-phosphocholine + a fatty acid + H(+). It catalyses the reaction 1-hexadecanoyl-sn-glycero-3-phosphocholine + H2O = sn-glycerol 3-phosphocholine + hexadecanoate + H(+). The catalysed reaction is N-(acetyl)-sphing-4-enine + a 1,2-diacyl-sn-glycero-3-phosphoethanolamine = 1-O-acyl-N-(acetyl)-sphing-4-enine + a 2-acyl-sn-glycero-3-phosphoethanolamine. The enzyme catalyses 1-hexadecanoyl-2-(9Z-octadecenoyl)-sn-glycero-3-phosphoethanolamine + N-(acetyl)-sphing-4-enine = 2-(9Z-octadecenoyl)-sn-glycero-3-phosphoethanolamine + 1-hexadecanoyl-N-(acetyl)-sphing-4-enine. It carries out the reaction 1-hexadecanoyl-2-(9Z,12Z-octadecadienoyl)-sn-glycero-3-phosphoethanolamine + N-(acetyl)-sphing-4-enine = 2-(9Z,12Z)-octadecadienoyl-sn-glycero-3-phosphoethanolamine + 1-hexadecanoyl-N-(acetyl)-sphing-4-enine. It catalyses the reaction 1-hexadecanoyl-2-(5Z,8Z,11Z,14Z-eicosatetraenoyl)-sn-glycero-3-phosphoethanolamine + N-(acetyl)-sphing-4-enine = 2-(5Z,8Z,11Z,14Z)-eicosatetraenoyl-sn-glycero-3-phosphoethanolamine + 1-hexadecanoyl-N-(acetyl)-sphing-4-enine. The catalysed reaction is N-(acetyl)-sphing-4-enine + a 1,2-diacyl-sn-glycero-3-phosphoethanolamine = 1-O-acyl-N-(acetyl)-sphing-4-enine + a 1-acyl-sn-glycero-3-phosphoethanolamine. The enzyme catalyses 1-hexadecanoyl-2-(9Z-octadecenoyl)-sn-glycero-3-phosphoethanolamine + N-(acetyl)-sphing-4-enine = 1-(9Z-octadecenoyl)-N-(acetyl)-sphing-4-enine + 1-hexadecanoyl-sn-glycero-3-phosphoethanolamine. It carries out the reaction 1-hexadecanoyl-2-(9Z,12Z-octadecadienoyl)-sn-glycero-3-phosphoethanolamine + N-(acetyl)-sphing-4-enine = 1-(9Z,12Z-octadecadienoyl)-N-acetylsphing-4-enine + 1-hexadecanoyl-sn-glycero-3-phosphoethanolamine. It catalyses the reaction 1-hexadecanoyl-2-(5Z,8Z,11Z,14Z-eicosatetraenoyl)-sn-glycero-3-phosphoethanolamine + N-(acetyl)-sphing-4-enine = 1-(5Z,8Z,11Z,14Z)-eicosatetraenoyl-N-(acetyl)-sphing-4-enine + 1-hexadecanoyl-sn-glycero-3-phosphoethanolamine. The catalysed reaction is N-(acetyl)-sphing-4-enine + a 1,2-diacyl-sn-glycero-3-phosphocholine = 1-O-acyl-N-(acetyl)-sphing-4-enine + a 2-acyl-sn-glycero-3-phosphocholine. The enzyme catalyses 1-hexadecanoyl-2-(9Z-octadecenoyl)-sn-glycero-3-phosphocholine + N-(acetyl)-sphing-4-enine = 1-hexadecanoyl-N-(acetyl)-sphing-4-enine + 2-(9Z-octadecenoyl)-sn-glycero-3-phosphocholine. It carries out the reaction 1-hexadecanoyl-2-(9Z,12Z-octadecadienoyl)-sn-glycero-3-phosphocholine + N-(acetyl)-sphing-4-enine = 2-(9Z,12Z-octadecadienoyl)-sn-glycero-3-phosphocholine + 1-hexadecanoyl-N-(acetyl)-sphing-4-enine. It catalyses the reaction 1-hexadecanoyl-2-(5Z,8Z,11Z,14Z-eicosatetraenoyl)-sn-glycero-3-phosphocholine + N-(acetyl)-sphing-4-enine = 1-hexadecanoyl-N-(acetyl)-sphing-4-enine + 2-(5Z,8Z,11Z,14Z)-eicosatetraenoyl-sn-glycero-3-phosphocholine. The catalysed reaction is 1-hexadecanoyl-2-(4Z,7Z,10Z,13Z,16Z,19Z-docosahexaenoyl)-sn-glycero-3-phosphocholine + N-(acetyl)-sphing-4-enine = 2-(4Z,7Z,10Z,13Z,16Z,19Z-docosahexaenoyl)-sn-glycero-3-phosphocholine + 1-hexadecanoyl-N-(acetyl)-sphing-4-enine. The enzyme catalyses 1-hexadecanoyl-2-nonadioyl-sn-glycero-3-phosphocholine + N-(acetyl)-sphing-4-enine = 2-nonadioyl-sn-glycero-3-phosphocholine + 1-hexadecanoyl-N-(acetyl)-sphing-4-enine. It carries out the reaction 1-octadecanoyl-2-(9Z-octadecenoyl)-sn-glycero-3-phosphocholine + N-(acetyl)-sphing-4-enine = 1-octadecanoyl-N-(acetyl)-sphing-4-enine + 2-(9Z-octadecenoyl)-sn-glycero-3-phosphocholine. It catalyses the reaction 1-(9Z)-octadecenoyl-2-octadecanoyl-sn-glycero-3-phosphocholine + N-(acetyl)-sphing-4-enine = 2-octadecanoyl-sn-glycero-3-phosphocholine + 1-(9Z-octadecenoyl)-N-(acetyl)-sphing-4-enine. The catalysed reaction is 1-octadecanoyl-2-(5Z,8Z,11Z,14Z-eicosatetraenoyl)-sn-glycero-3-phosphocholine + N-(acetyl)-sphing-4-enine = 1-octadecanoyl-N-(acetyl)-sphing-4-enine + 2-(5Z,8Z,11Z,14Z)-eicosatetraenoyl-sn-glycero-3-phosphocholine. The enzyme catalyses 1-(9Z-octadecenoyl)-2-hexadecanoyl-sn-glycero-3-phosphocholine + N-(acetyl)-sphing-4-enine = 1-(9Z-octadecenoyl)-N-(acetyl)-sphing-4-enine + 2-hexadecanoyl-sn-glycero-3-phosphocholine. It carries out the reaction N-(acetyl)-sphing-4-enine + a 1,2-diacyl-sn-glycero-3-phosphocholine = 1-O-acyl-N-(acetyl)-sphing-4-enine + a 1-acyl-sn-glycero-3-phosphocholine. It catalyses the reaction 1-hexadecanoyl-2-(9Z-octadecenoyl)-sn-glycero-3-phosphocholine + N-(acetyl)-sphing-4-enine = 1-(9Z-octadecenoyl)-N-(acetyl)-sphing-4-enine + 1-hexadecanoyl-sn-glycero-3-phosphocholine. The catalysed reaction is 1-hexadecanoyl-2-(9Z,12Z-octadecadienoyl)-sn-glycero-3-phosphocholine + N-(acetyl)-sphing-4-enine = 1-(9Z,12Z-octadecadienoyl)-N-acetylsphing-4-enine + 1-hexadecanoyl-sn-glycero-3-phosphocholine. The enzyme catalyses 1-hexadecanoyl-2-(5Z,8Z,11Z,14Z-eicosatetraenoyl)-sn-glycero-3-phosphocholine + N-(acetyl)-sphing-4-enine = 1-(5Z,8Z,11Z,14Z)-eicosatetraenoyl-N-(acetyl)-sphing-4-enine + 1-hexadecanoyl-sn-glycero-3-phosphocholine. It carries out the reaction 1-hexadecanoyl-2-(4Z,7Z,10Z,13Z,16Z,19Z-docosahexaenoyl)-sn-glycero-3-phosphocholine + N-(acetyl)-sphing-4-enine = 1-(4Z,7Z,10Z,13Z,16Z,19Z-docosahexaenoyl)-N-(acetyl)-sphing-4-enine + 1-hexadecanoyl-sn-glycero-3-phosphocholine. It catalyses the reaction 1-octadecanoyl-2-(9Z-octadecenoyl)-sn-glycero-3-phosphocholine + N-(acetyl)-sphing-4-enine = 1-(9Z-octadecenoyl)-N-(acetyl)-sphing-4-enine + 1-octadecanoyl-sn-glycero-3-phosphocholine. The catalysed reaction is 1-octadecanoyl-2-(9Z,12Z)-octadecadienoyl-sn-glycero-3-phosphocholine + N-(acetyl)-sphing-4-enine = 1-(9Z,12Z-octadecadienoyl)-N-acetylsphing-4-enine + 1-octadecanoyl-sn-glycero-3-phosphocholine. The enzyme catalyses 1-(9Z-octadecenoyl)-2-hexadecanoyl-sn-glycero-3-phosphocholine + N-(acetyl)-sphing-4-enine = 1-hexadecanoyl-N-(acetyl)-sphing-4-enine + 1-(9Z-octadecenoyl)-sn-glycero-3-phosphocholine. It carries out the reaction 1-(9Z)-octadecenoyl-2-octadecanoyl-sn-glycero-3-phosphocholine + N-(acetyl)-sphing-4-enine = 1-octadecanoyl-N-(acetyl)-sphing-4-enine + 1-(9Z-octadecenoyl)-sn-glycero-3-phosphocholine. It catalyses the reaction 1,2-di-(9Z-octadecenoyl)-sn-glycero-3-phosphocholine + N-(acetyl)-sphing-4-enine = 1-(9Z-octadecenoyl)-N-(acetyl)-sphing-4-enine + 1-(9Z-octadecenoyl)-sn-glycero-3-phosphocholine. The catalysed reaction is 1-octadecanoyl-2-(5Z,8Z,11Z,14Z-eicosatetraenoyl)-sn-glycero-3-phosphocholine + N-(acetyl)-sphing-4-enine = 1-(5Z,8Z,11Z,14Z)-eicosatetraenoyl-N-(acetyl)-sphing-4-enine + 1-octadecanoyl-sn-glycero-3-phosphocholine. The enzyme catalyses a 1,2-diacyl-sn-glycero-3-phospho-L-serine + N-(acetyl)-sphing-4-enine = a 2-acyl-sn-glycero-3-phospho-L-serine + 1-O-acyl-N-(acetyl)-sphing-4-enine. It carries out the reaction 1-octadecanoyl-2-(9Z-octadecenoyl)-sn-glycero-3-phospho-L-serine + N-(acetyl)-sphing-4-enine = 2-(9Z-octadecenoyl)-sn-glycero-3-phospho-L-serine + 1-octadecanoyl-N-(acetyl)-sphing-4-enine. It catalyses the reaction a 1,2-diacyl-sn-glycero-3-phospho-L-serine + N-(acetyl)-sphing-4-enine = 1-O-acyl-N-(acetyl)-sphing-4-enine + a 1-acyl-sn-glycero-3-phospho-L-serine. The catalysed reaction is 1-octadecanoyl-2-(9Z-octadecenoyl)-sn-glycero-3-phospho-L-serine + N-(acetyl)-sphing-4-enine = 1-octadecanoyl-sn-glycero-3-phosphoserine + 1-(9Z-octadecenoyl)-N-(acetyl)-sphing-4-enine. The enzyme catalyses a 1,2-diacyl-sn-glycero-3-phospho-(1'-sn-glycerol) + N-(acetyl)-sphing-4-enine = 2-acyl-sn-glycero-3-phospho-(1'-sn-glycerol) + 1-O-acyl-N-(acetyl)-sphing-4-enine. It carries out the reaction 1-octadecanoyl-2-(9Z-octadecenoyl)-sn-glycero-3-phospho-(1'-sn-glycerol) + N-(acetyl)-sphing-4-enine = 2-(9Z-octadecenoyl)-sn-glycero-3-phospho-(1'-sn-glycerol) + 1-octadecanoyl-N-(acetyl)-sphing-4-enine. It catalyses the reaction a 1,2-diacyl-sn-glycero-3-phospho-(1'-sn-glycerol) + N-(acetyl)-sphing-4-enine = 1-O-acyl-N-(acetyl)-sphing-4-enine + 1-acyl-sn-glycero-3-phospho-(1'-sn-glycerol). The catalysed reaction is 1-octadecanoyl-2-(9Z-octadecenoyl)-sn-glycero-3-phospho-(1'-sn-glycerol) + N-(acetyl)-sphing-4-enine = 1-octadecanoyl-sn-glycero-3-phospho-(1'-sn-glycerol) + 1-(9Z-octadecenoyl)-N-(acetyl)-sphing-4-enine. The enzyme catalyses an N-acylethanolamine + a 1,2-diacyl-sn-glycero-3-phosphocholine = 2-(acylamino)ethyl fatty acid + a 2-acyl-sn-glycero-3-phosphocholine. It carries out the reaction an N-acylethanolamine + a 1,2-diacyl-sn-glycero-3-phosphocholine = 2-(acylamino)ethyl fatty acid + a 1-acyl-sn-glycero-3-phosphocholine. It catalyses the reaction N-(5Z,8Z,11Z,14Z-eicosatetraenoyl)-ethanolamine + 1,2-di-(9Z-octadecenoyl)-sn-glycero-3-phosphocholine = 2-[(5Z,8Z,11Z,14Z)-eicosatetraenoylamino]ethyl (9Z)-octadecenoate + (9Z-octadecenoyl)-sn-glycero-3-phosphocholine. The catalysed reaction is N-(9Z-octadecenoyl) ethanolamine + 1,2-di-(9Z-octadecenoyl)-sn-glycero-3-phosphocholine = 2-[(9Z)-octadecenoylamino]ethyl (9Z)-octadecenoate + (9Z-octadecenoyl)-sn-glycero-3-phosphocholine. The enzyme catalyses a 3-acyl-sn-glycerol + a 1,2-diacyl-sn-glycero-3-phosphocholine = a 1,3-diacylglycerol + a 1-acyl-sn-glycero-3-phosphocholine. It carries out the reaction a 3-acyl-sn-glycerol + a 1,2-diacyl-sn-glycero-3-phosphocholine = a 1,3-diacylglycerol + a 2-acyl-sn-glycero-3-phosphocholine. It catalyses the reaction 3-(9Z-octadecenoyl)-sn-glycerol + 1,2-di-(9Z-octadecenoyl)-sn-glycero-3-phosphocholine = 1,3-di-(9Z-octadecenoyl)-glycerol + (9Z-octadecenoyl)-sn-glycero-3-phosphocholine. The catalysed reaction is 3-hexadecanoyl-sn-glycerol + 1,2-di-(9Z-octadecenoyl)-sn-glycero-3-phosphocholine = 1-(9Z)-octadecenoyl-3-hexadecanoyl-sn-glycerol + (9Z-octadecenoyl)-sn-glycero-3-phosphocholine. The enzyme catalyses a 1-acyl-sn-glycerol + a 1,2-diacyl-sn-glycero-3-phosphocholine = a 1,3-diacylglycerol + a 2-acyl-sn-glycero-3-phosphocholine. It carries out the reaction a 1-acyl-sn-glycerol + a 1,2-diacyl-sn-glycero-3-phosphocholine = a 1,3-diacylglycerol + a 1-acyl-sn-glycero-3-phosphocholine. It catalyses the reaction 1-(9Z-octadecenoyl)-sn-glycerol + 1,2-di-(9Z-octadecenoyl)-sn-glycero-3-phosphocholine = 1,3-di-(9Z-octadecenoyl)-glycerol + (9Z-octadecenoyl)-sn-glycero-3-phosphocholine. The catalysed reaction is 1-hexadecanoyl-sn-glycerol + 1,2-di-(9Z-octadecenoyl)-sn-glycero-3-phosphocholine = 1-hexadecanoyl-3-(9Z)-octadecenoyl-sn-glycerol + (9Z-octadecenoyl)-sn-glycero-3-phosphocholine. The enzyme catalyses a 2-acylglycerol + a 1,2-diacyl-sn-glycero-3-phosphocholine = a 1,2-diacylglycerol + a 2-acyl-sn-glycero-3-phosphocholine. It carries out the reaction a 2-acylglycerol + a 1,2-diacyl-sn-glycero-3-phosphocholine = a 1,2-diacylglycerol + a 1-acyl-sn-glycero-3-phosphocholine. It catalyses the reaction 2-hexadecanoylglycerol + 1,2-di-(9Z-octadecenoyl)-sn-glycero-3-phosphocholine = 1-(9Z)-octadecenoyl-2-hexadecanoylglycerol + (9Z-octadecenoyl)-sn-glycero-3-phosphocholine. The catalysed reaction is 1-O-alkylglycerol + a 1,2-diacyl-sn-glycero-3-phosphocholine = 1-O-alkyl-3-acylglycerol + a 1-acyl-sn-glycero-3-phosphocholine. The enzyme catalyses 1-O-alkylglycerol + a 1,2-diacyl-sn-glycero-3-phosphocholine = 1-O-alkyl-3-acylglycerol + a 2-acyl-sn-glycero-3-phosphocholine. It carries out the reaction 1-O-hexadecylglycerol + 1,2-di-(9Z-octadecenoyl)-sn-glycero-3-phosphocholine = 1-O-hexadecyl-3-(9Z)-octadecenoylglycerol + (9Z-octadecenoyl)-sn-glycero-3-phosphocholine. It catalyses the reaction 1-O-alkyl-2-acyl-sn-glycerol + a 1,2-diacyl-sn-glycero-3-phosphocholine = 1-O-alkyl-2,3-diacyl-sn-glycerol + a 2-acyl-sn-glycero-3-phosphocholine. The catalysed reaction is 1-O-alkyl-2-acyl-sn-glycerol + a 1,2-diacyl-sn-glycero-3-phosphocholine = 1-O-alkyl-2,3-diacyl-sn-glycerol + a 1-acyl-sn-glycero-3-phosphocholine. The enzyme catalyses 1-O-hexadecyl-2-acetyl-sn-glycerol + 1,2-di-(9Z-octadecenoyl)-sn-glycero-3-phosphocholine = 1-O-hexadecyl-2-acetyl-3-(9Z)-octadecenoyl-sn-glycerol + (9Z-octadecenoyl)-sn-glycero-3-phosphocholine. It carries out the reaction 1-O-hexadecyl-2-O-methyl-sn-glycerol + 1,2-di-(9Z-octadecenoyl)-sn-glycero-3-phosphocholine = 1-O-hexadecyl-2-O-methyl-3-(9Z)-octadecenoyl-sn-glycerol + (9Z-octadecenoyl)-sn-glycero-3-phosphocholine. It catalyses the reaction a 1,2-diacyl-sn-glycero-3-phosphoethanolamine + H2O = a 1-acyl-sn-glycero-3-phosphoethanolamine + a fatty acid + H(+). The catalysed reaction is 1-acyl-2-(5Z,8Z,11Z,14Z)-eicosatetraenoyl-sn-glycero-3-phosphoethanolamine + H2O = a 1-acyl-sn-glycero-3-phosphoethanolamine + (5Z,8Z,11Z,14Z)-eicosatetraenoate + H(+). The enzyme catalyses a 1,2-diacyl-sn-glycero-3-phospho-(1'-sn-glycerol) + H2O = 1-acyl-sn-glycero-3-phospho-(1'-sn-glycerol) + a fatty acid + H(+). It carries out the reaction 1-hexadecanoyl-2-(9Z-octadecenoyl)-sn-glycero-3-phospho-(1'-sn-glycerol) + H2O = 1-hexadecanoyl-sn-glycero-3-phospho-(1'-sn-glycerol) + (9Z)-octadecenoate + H(+). It catalyses the reaction a 1,2-diacyl-sn-glycero-3-phospho-(1'-sn-glycerol) + H2O = 2-acyl-sn-glycero-3-phospho-(1'-sn-glycerol) + a fatty acid + H(+). The catalysed reaction is 1-hexadecanoyl-2-(9Z-octadecenoyl)-sn-glycero-3-phospho-(1'-sn-glycerol) + H2O = 2-(9Z-octadecenoyl)-sn-glycero-3-phospho-(1'-sn-glycerol) + hexadecanoate + H(+). With respect to regulation, transacylase activity is completely inhibited by Triton X-100 and partially inhibited by heparin. Moderately activated by Mg(2+) and Ca(2+). Its function is as follows. Has dual calcium-independent phospholipase and O-acyltransferase activities with a potential role in glycerophospholipid homeostasis and remodeling of acyl groups of lipophilic alcohols present in acidic cellular compartments. Catalyzes hydrolysis of the ester bond of the fatty acyl group attached at sn-1 or sn-2 position of phospholipids (phospholipase A1 or A2 activity) and transfer it to the hydroxyl group at the first carbon of lipophilic alcohols (O-acyltransferase activity). Among preferred fatty acyl donors are phosphatidylcholines, phosphatidylethanolamines, phosphatidylglycerols and phosphatidylserines. Favors sn-2 over sn-1 deacylation of unsaturated fatty acyl groups of phosphatidylcholines, phosphatidylethanolamines, and phosphatidylglycerols. Among preferred fatty acyl acceptors are natural lipophilic alcohols including short-chain ceramide N-acetyl-sphingosine (C2 ceramide), alkylacylglycerols, monoacylglycerols, and acylethanolamides such as anandamide and oleoylethanolamide. Selectively hydrolyzes the sn-1 fatty acyl group of truncated oxidized phospholipids and may play a role in detoxification of reactive oxidized phospholipids during oxidative stress. Required for normal phospholipid degradation in alveolar macrophages with potential implications in the clearance of pulmonary surfactant, which is mainly composed of dipalmitoylphosphatidylcholine (1,2-dihexadecanoyl-sn-glycero-3-phosphocholine). Involved in the first step of bis(monoacylglycero)phosphate (BMP) de novo synthesis from phosphatidylglycerol (1,2-diacyl-sn-glycero-3-phospho-(1'-sn-glycerol), PG). BMP is an important player in cargo sorting and degradation, regulation of cellular cholesterol levels and intercellular communication. At neutral pH, hydrolyzes the sn-1 fatty acyl group of the lysophosphatidylcholines. The sequence is that of Lysosomal phospholipase A and acyltransferase (PLA2G15) from Bos taurus (Bovine).